We begin with the raw amino-acid sequence, 488 residues long: IQ domain-containing protein IQM1 (488 aa).

The segment at 20-46 (RTNSFKRDDTNRHQNSPKSTMERSLSF) is disordered. The span at 32-46 (HQNSPKSTMERSLSF) shows a compositional bias: polar residues. Residues 106-135 (LDAAATTLQKVYKSYRTRRNLADCAVVVEE) form the IQ domain. Disordered regions lie at residues 377-403 (SFKS…EKEE) and 448-472 (SPRV…VRVS). The segment covering 388–403 (RKEVSEEVEIPSEKEE) has biased composition (basic and acidic residues).

Interacts (via IQ domain) with CAM5. As to expression, highly expressed in leaf mesophyll cells. Expressed in roots, rosette and cauline leaves, stems, flowers and siliques.

It localises to the cytoplasm. Its subcellular location is the nucleus. In terms of biological role, involved in the modulation of stomatal movement. Promotes stomatal opening. May play a role in the regulation of chitin signaling. May be involved in biotic and abiotic stress responses. The chain is IQ domain-containing protein IQM1 from Arabidopsis thaliana (Mouse-ear cress).